The sequence spans 493 residues: MTLAKHDSYDIVVVGTGAAGTAAALEAAQHGASVLLLEKGRHTGGSSNYTEGLFAVDSYLQKAQNINVSATDVLKEEVDYSKYRADSRIWRRYLDDSANTVQWLKDQGVEYEGVQAMGAGEATWHIYKGMGQAVLHDALQPQAQKLGVELLTSTTAITLHQATDGAITGVMIQSAATNETQVINTAAVILATGGYLNNPDMMQKLTHYDTRRLIPVSSGKGTGDGLRLAWQAGAQQYGTGMAMLFGGYLKDPSEPSFKYMASQMETAAGQQPLLWLNEHGERFVDEAVVYNFSYAGNALYTQNQVFSILDQGVINKMAQDGNFMGLGVYVRRGEKMTKLQAEIDAAVAANKPFIFKANTIEALATKMHLPVDQVTHSIQTYNQYCDNGQDDDFGKNPEYLVKVSQGPFYGFELNVGAFCTMGGLKVTTNNEVLDTTGQPITGLYAAGNDAAGLTGDTYGPNMPGTCVGYAFYSGRNSGRHAAQYTHQQSIVSH.

FAD contacts are provided by Ala19, Glu38, Ser46, Thr50, Gly52, Ala156, Asp224, Asn448, and Val467.

The protein belongs to the FAD-dependent oxidoreductase 2 family. FRD/SDH subfamily. Requires FAD as cofactor.

It catalyses the reaction 4-vinylphenol + NADH + H(+) = 4-ethylphenol + NAD(+). The catalysed reaction is 3,4-dihydroxystyrene + NADH + H(+) = 4-ethylcatechol + NAD(+). The enzyme catalyses 2-methoxy-4-vinylphenol + NADH + H(+) = 4-ethyl-2-methoxyphenol + NAD(+). Its function is as follows. Involved in the production of ethylphenols during the degradation of hydroxycinnamic acids. Catalyzes the reduction of vinylphenols (4-vinylphenol (4-hydroxystyrene), 4-vinylcatechol (3,4-dihydroxystyrene), and 4-vinylguaiacol (2-methoxy-4-vinylphenol)) to their corresponding ethylphenols (4-ethylphenol, 4-ethylcatechol, and 4-ethylguaiacol, respectively) in the presence of NADH. These compounds are considered the most important flavor components of fermented soy sauce, and, on the other hand, are considered off flavor and responsible for sensorial wine and cider alteration. The 4-ethylphenol produced by the gut bacteria L.plantarum strain WCFS1 can get subsequent sulfation to 4-ethylphenyl sulfate (4EPS) by host sulfotransferase (SULT1A1); 4EPS can enter the brain and seems to alter brain activity. Therefore, this enzyme likely plays a role in gut microbiota-host metabolic interactions. In Lactiplantibacillus plantarum (strain ATCC BAA-793 / NCIMB 8826 / WCFS1) (Lactobacillus plantarum), this protein is Vinyl phenol reductase.